Consider the following 734-residue polypeptide: Subtilisin-like protease (734 aa).

The signal sequence occupies residues 1-20; the sequence is MTCICIFSIAFLLSFHLTTA. The Inhibitor I9 domain occupies 28 to 109; sequence TYIVHVDKPD…AKLEKVLTLH (82 aa). In terms of domain architecture, Peptidase S8 spans 114–591; it reads PNFLGLYQNM…AGHVNPSKAS (478 aa). The active-site Charge relay system is the aspartate 141. Asparagine 172 is a glycosylation site (N-linked (GlcNAc...) asparagine). Histidine 199 serves as the catalytic Charge relay system. N-linked (GlcNAc...) asparagine glycosylation is found at asparagine 222 and asparagine 306. One can recognise a PA domain in the interval 357-442; that stretch reads PLVYPGTSDE…THVGYAAGEM (86 aa). N-linked (GlcNAc...) asparagine glycosylation is found at asparagine 448 and asparagine 509. Serine 524 acts as the Charge relay system in catalysis. N-linked (GlcNAc...) asparagine glycosylation occurs at asparagine 652.

Belongs to the peptidase S8 family.

Its subcellular location is the secreted. The protein resides in the extracellular space. The protein localises to the apoplast. In terms of biological role, required for arbuscular mycorrhiza (AM) development during AM symbiosis with AM fungi (e.g. Glomeromycota intraradices). The protein is Subtilisin-like protease of Petunia hybrida (Petunia).